The sequence spans 340 residues: Cell growth-regulated gene 1 protein (340 aa).

This sequence belongs to the SMP-30/CGR1 family.

Involved in the cell growth regulation. The polypeptide is Cell growth-regulated gene 1 protein (CGR1) (Candida albicans (strain SC5314 / ATCC MYA-2876) (Yeast)).